Here is a 321-residue protein sequence, read N- to C-terminus: Acetylglutamate kinase (321 aa).

Substrate-binding positions include 88–89 (GG), arginine 110, and asparagine 216.

This sequence belongs to the acetylglutamate kinase family. ArgB subfamily.

It is found in the cytoplasm. It catalyses the reaction N-acetyl-L-glutamate + ATP = N-acetyl-L-glutamyl 5-phosphate + ADP. The protein operates within amino-acid biosynthesis; L-arginine biosynthesis; N(2)-acetyl-L-ornithine from L-glutamate: step 2/4. In terms of biological role, catalyzes the ATP-dependent phosphorylation of N-acetyl-L-glutamate. This is Acetylglutamate kinase from Ehrlichia chaffeensis (strain ATCC CRL-10679 / Arkansas).